The following is a 442-amino-acid chain: MTNTNETIFALSTVFGKSGVAVIRISGNYTLKALNHFHIKKKIKPRFATLVDLYDDSNQLIDNGIIIYFPAPNSFTGEDVIELQVHGSKAVIKIILEKLSKIFVMARPGEFSLRAFLNGKFDLTQIEGIADLIDAETKMQAKQAIKQISGELERLYSNWRQRLITIQSKIEAYIDFPEDIWAEKSELEKINNEVQSLVQLIQEHLNDNRRGERLREGLHIVITGEPNVGKSTLFNFLAKRDIAIVSEYAGTTRDILEAHIDIGGYPIILSDTAGIRESSDPIESEGISRAKKRSFEADLRIELFPFEQRHNINCNVVNSDTIYVLSKADDAINDRNILIGGVDFLPISILKGIGTNKLISLIKKKAEEKFGHDRDTPVITRQRHRSHMQKALEHLQRFKIDNPIELISEDLRLAAFELGAVIGIINVEEILDSVFSSFCVGK.

Positions 24, 82, and 120 each coordinate (6S)-5-formyl-5,6,7,8-tetrahydrofolate. The TrmE-type G domain maps to 217–367 (GLHIVITGEP…LISLIKKKAE (151 aa)). Residues 227–232 (NVGKST), 246–252 (SEYAGTT), and 271–274 (DTAG) each bind GTP. S231 contributes to the Mg(2+) binding site. S246 provides a ligand contact to K(+). Position 252 (T252) interacts with Mg(2+). K442 serves as a coordination point for (6S)-5-formyl-5,6,7,8-tetrahydrofolate.

This sequence belongs to the TRAFAC class TrmE-Era-EngA-EngB-Septin-like GTPase superfamily. TrmE GTPase family. Homodimer. Heterotetramer of two MnmE and two MnmG subunits. K(+) is required as a cofactor.

The protein resides in the cytoplasm. In terms of biological role, exhibits a very high intrinsic GTPase hydrolysis rate. Involved in the addition of a carboxymethylaminomethyl (cmnm) group at the wobble position (U34) of certain tRNAs, forming tRNA-cmnm(5)s(2)U34. In Wolbachia pipientis subsp. Culex pipiens (strain wPip), this protein is tRNA modification GTPase MnmE.